The chain runs to 300 residues: Iodotyrosine deiodinase (300 aa).

The helical transmembrane segment at Val15–Leu31 threads the bilayer. FMN-binding positions include Arg110–Arg114, Ser138, and Ser138–Gly139. 3,5-diiodo-L-tyrosine contacts are provided by Ala140, Glu167, Tyr171, and Lys192. Residues Ala140, Glu167, Tyr171, and Lys192 each coordinate 3-iodo-L-tyrosine. Residues Thr247–Thr249 and Arg289 each bind FMN.

Belongs to the nitroreductase family. The cofactor is FMN. In terms of processing, may be cleaved at Gln-55. The cleaved form retains catalytic activity.

The protein localises to the membrane. The enzyme catalyses 2 iodide + L-tyrosine + 2 NADP(+) = 3,5-diiodo-L-tyrosine + 2 NADPH + H(+). It catalyses the reaction iodide + L-tyrosine + NADP(+) = 3-iodo-L-tyrosine + NADPH. The catalysed reaction is 3-iodo-L-tyrosine + iodide + NADP(+) = 3,5-diiodo-L-tyrosine + NADPH + H(+). It carries out the reaction L-tyrosine + chloride + NADP(+) = 3-chloro-L-tyrosine + NADPH. The enzyme catalyses bromide + L-tyrosine + NADP(+) = 3-bromo-L-tyrosine + NADPH. Catalyzes the dehalogenation of halotyrosines such as 3,5-diiodo-L-tyrosine. Likely to also catalyze the dehalogenation of other halotyrosines such as 3-bromo-L-tyrosine, 3-chloro-L-tyrosine and 3-iodo-L-tyrosine. This is Iodotyrosine deiodinase from Daphnia pulex (Water flea).